Consider the following 1035-residue polypeptide: Sulfite reductase [NADPH] flavoprotein component (1035 aa).

The FAD-binding FR-type domain occupies 648–879; that stretch reads VKNFVVKVKE…VKPSVMKLPP (232 aa). FAD is bound by residues 684–695 and 814–824; these read YDIGEALGIHAR and LKRREYSIASS.

It depends on FAD as a cofactor. FMN is required as a cofactor.

The enzyme catalyses hydrogen sulfide + 3 NADP(+) + 3 H2O = sulfite + 3 NADPH + 4 H(+). It functions in the pathway sulfur metabolism; hydrogen sulfide biosynthesis; hydrogen sulfide from sulfite (NADPH route): step 1/1. This enzyme catalyzes the 6-electron reduction of sulfite to sulfide. This is one of several activities required for the biosynthesis of L-cysteine from sulfate. This Saccharomyces cerevisiae (strain ATCC 204508 / S288c) (Baker's yeast) protein is Sulfite reductase [NADPH] flavoprotein component (MET10).